The primary structure comprises 447 residues: tRNA-2-methylthio-N(6)-dimethylallyladenosine synthase (447 aa).

The 116-residue stretch at 1–116 folds into the MTTase N-terminal domain; it reads MYIRTFGCQM…LPDLIKRRRA (116 aa). [4Fe-4S] cluster is bound by residues Cys-8, Cys-45, Cys-79, Cys-153, Cys-157, and Cys-160. Positions 139 to 372 constitute a Radical SAM core domain; the sequence is RVDGATAFVS…QALINQQAAA (234 aa). Residues 375 to 438 form the TRAM domain; that stretch reads QGMIGTRQRV…TNSLRGRVAG (64 aa).

It belongs to the methylthiotransferase family. MiaB subfamily. Monomer. Requires [4Fe-4S] cluster as cofactor.

Its subcellular location is the cytoplasm. It catalyses the reaction N(6)-dimethylallyladenosine(37) in tRNA + (sulfur carrier)-SH + AH2 + 2 S-adenosyl-L-methionine = 2-methylsulfanyl-N(6)-dimethylallyladenosine(37) in tRNA + (sulfur carrier)-H + 5'-deoxyadenosine + L-methionine + A + S-adenosyl-L-homocysteine + 2 H(+). Catalyzes the methylthiolation of N6-(dimethylallyl)adenosine (i(6)A), leading to the formation of 2-methylthio-N6-(dimethylallyl)adenosine (ms(2)i(6)A) at position 37 in tRNAs that read codons beginning with uridine. This is tRNA-2-methylthio-N(6)-dimethylallyladenosine synthase from Bordetella pertussis (strain Tohama I / ATCC BAA-589 / NCTC 13251).